Here is a 422-residue protein sequence, read N- to C-terminus: Cytokine receptor-like factor 1 (422 aa).

Residues 1–37 form the signal peptide; it reads MPAGRRGPAAQSARRPPPLLPLLLLLCVLGAPRAGSG. The Ig-like C2-type domain occupies 38-131; sequence AHTAVISPQD…SILAGSCLYV (94 aa). 3 N-linked (GlcNAc...) asparagine glycosylation sites follow: Asn-92, Asn-104, and Asn-140. Fibronectin type-III domains lie at 137 to 232 and 237 to 341; these read KPVN…ILDV and PPPD…TPRS. A disulfide bridge links Cys-143 with Cys-153. An N-linked (GlcNAc...) asparagine glycan is attached at Asn-168. Cys-184 and Cys-195 are oxidised to a cystine. Ser-219 carries the phosphoserine modification. Asn-292 carries an N-linked (GlcNAc...) asparagine glycan. The WSXWS motif motif lies at 327–331; it reads WSEWS. The interval 332 to 363 is disordered; sequence HPTAASTPRSERPGPGGGACEPRGGEPSSGPV. An N-linked (GlcNAc...) asparagine glycan is attached at Asn-382. The tract at residues 399-422 is disordered; that stretch reads HKTRNQDEGILPSGRRGTARGPAR.

This sequence belongs to the type I cytokine receptor family. Type 3 subfamily. As to quaternary structure, forms covalent di- and tetramers. Forms a heteromeric complex with cardiotrophin-like cytokine CLCF1/CLC; the CRLF1-CLCF1 complex is a ligand for the ciliary neurotrophic factor receptor/CNTFR. The CRLF1-CLCF1 heterodimer binds SORL1 (via N-terminal ectodomain); within this complex, the interaction is mediated predominantly by the CRLF1 moiety. The tripartite signaling complex formed by CRLF1, CLCF1 and CNTFR also binds SORL1. Highest levels of expression observed in spleen, thymus, lymph node, appendix, bone marrow, stomach, placenta, heart, thyroid and ovary. Strongly expressed also in fetal lung.

It is found in the secreted. In terms of biological role, in complex with CLCF1, forms a heterodimeric neurotropic cytokine that plays a crucial role during neuronal development. May also play a regulatory role in the immune system. The polypeptide is Cytokine receptor-like factor 1 (CRLF1) (Homo sapiens (Human)).